The sequence spans 404 residues: Phosphoglycerate kinase (404 aa).

Substrate contacts are provided by residues 22 to 24 (DFN), arginine 37, 60 to 63 (HLGR), arginine 120, and arginine 160. ATP-binding positions include lysine 215, glutamate 333, and 360 to 363 (GGDS).

The protein belongs to the phosphoglycerate kinase family. As to quaternary structure, monomer.

The protein resides in the cytoplasm. The enzyme catalyses (2R)-3-phosphoglycerate + ATP = (2R)-3-phospho-glyceroyl phosphate + ADP. The protein operates within carbohydrate degradation; glycolysis; pyruvate from D-glyceraldehyde 3-phosphate: step 2/5. The chain is Phosphoglycerate kinase from Latilactobacillus sakei subsp. sakei (strain 23K) (Lactobacillus sakei subsp. sakei).